The primary structure comprises 194 residues: Putative manganese efflux pump MntP (194 aa).

6 helical membrane-spanning segments follow: residues 3–23, 37–57, 65–85, 112–132, 139–159, and 170–190; these read PITI…AAIG, LYVA…GWLL, IATF…IHMI, LAAT…SLAF, IVAA…VMLG, and AEIV…YEHL.

Belongs to the MntP (TC 9.B.29) family.

Its subcellular location is the cell inner membrane. Functionally, probably functions as a manganese efflux pump. This chain is Putative manganese efflux pump MntP, found in Xylella fastidiosa (strain 9a5c).